The primary structure comprises 109 residues: uncharacterized protein (109 aa).

This is an uncharacterized protein from Homo sapiens (Human).